The sequence spans 140 residues: Small ribosomal subunit protein eS17x (140 aa).

This sequence belongs to the eukaryotic ribosomal protein eS17 family.

In Arabidopsis thaliana (Mouse-ear cress), this protein is Small ribosomal subunit protein eS17x (RPS17C).